The following is a 444-amino-acid chain: Zinc protease PqqE (444 aa).

Positions 1–28 (MKHFSVKRLLGLSSVLLVTLGASMHAQS) are cleaved as a signal peptide. His78 provides a ligand contact to Zn(2+). Glu81 acts as the Proton acceptor in catalysis. The Zn(2+) site is built by His82 and Glu158.

It belongs to the peptidase M16 family. It depends on Zn(2+) as a cofactor.

It is found in the secreted. Can function alone, but full activity requires the presence of the non-peptidase homolog YmxG. Its function is as follows. Virulence factor that cleaves the cytoplasmic domain of the human junctional adhesion molecule A (JAM-A), compromising gastric epithelial barrier function and cell-cell adhesion. Cleavage of JAM-A occurs after Ala-285 or, to a lesser extent, before Ala-285. This chain is Zinc protease PqqE, found in Helicobacter pylori (strain ATCC 700392 / 26695) (Campylobacter pylori).